The chain runs to 325 residues: MIKIGIIGGAGYTANELIKILINHPKVEIKTIVSTTYPGIPIEYIHKDLIGEIKSNKLFSSEITDDIDLLFLCIGHGHSKKILKNISYKINVIDFSNDFRINKNFFFKKRIFNYGLPELNKNIINKYNNIANPGCFATAIQLSILPLAKIKLLKNNIHISAITGSTGAGRINNSKLNFSFRNNNISTYNLFNHNHINEVIQTINKLQNKYDGKIYFIPYRGGFSRGIISTLYTRIDLSFEEIKNIYDKFYKNDPFIFLSEKEIHLKQVINTNKCILNLKYIKNKLIITSIIDNLIKGASGQAVQNMNIMYNFEETCGLKLKPLGL.

Residue Cys135 is part of the active site.

Belongs to the NAGSA dehydrogenase family. Type 1 subfamily.

The protein localises to the cytoplasm. The enzyme catalyses N-acetyl-L-glutamate 5-semialdehyde + phosphate + NADP(+) = N-acetyl-L-glutamyl 5-phosphate + NADPH + H(+). It participates in amino-acid biosynthesis; L-arginine biosynthesis; N(2)-acetyl-L-ornithine from L-glutamate: step 3/4. Catalyzes the NADPH-dependent reduction of N-acetyl-5-glutamyl phosphate to yield N-acetyl-L-glutamate 5-semialdehyde. The sequence is that of N-acetyl-gamma-glutamyl-phosphate reductase from Karelsulcia muelleri (strain GWSS) (Sulcia muelleri).